Consider the following 419-residue polypeptide: 3-phosphoshikimate 1-carboxyvinyltransferase (419 aa).

Residues K21, S22, and R26 each contribute to the 3-phosphoshikimate site. Phosphoenolpyruvate is bound at residue K21. Phosphoenolpyruvate-binding residues include G91 and R119. Residues S164, S165, Q166, S191, D305, and K332 each contribute to the 3-phosphoshikimate site. Q166 contributes to the phosphoenolpyruvate binding site. D305 serves as the catalytic Proton acceptor. Phosphoenolpyruvate contacts are provided by R336 and R376.

The protein belongs to the EPSP synthase family. In terms of assembly, monomer.

The protein resides in the cytoplasm. It catalyses the reaction 3-phosphoshikimate + phosphoenolpyruvate = 5-O-(1-carboxyvinyl)-3-phosphoshikimate + phosphate. It functions in the pathway metabolic intermediate biosynthesis; chorismate biosynthesis. Functionally, catalyzes the transfer of the enolpyruvyl moiety of phosphoenolpyruvate (PEP) to the 5-hydroxyl of shikimate-3-phosphate (S3P) to produce enolpyruvyl shikimate-3-phosphate and inorganic phosphate. The sequence is that of 3-phosphoshikimate 1-carboxyvinyltransferase from Methanothermobacter thermautotrophicus (strain ATCC 29096 / DSM 1053 / JCM 10044 / NBRC 100330 / Delta H) (Methanobacterium thermoautotrophicum).